We begin with the raw amino-acid sequence, 193 residues long: MTDEEVLSEFRASEALLEGHFMLSSGRHSGHYLQCARVLMNPERAGRLAMALAQKLPRELRGEIDVVVSPAMGGLIIGHEMGRALGKDAIFLERPDGEFHLRRGFRLEPGAKVLMVEDVVTTGLSSREAIEAVKREGGEVVAEVSLVDRSAGEADLGVPYYALVEINFPTFANGEVPEGLARIPVTKPGSRAK.

117–125 contributes to the 5-phospho-alpha-D-ribose 1-diphosphate binding site; it reads EDVVTTGLS. The orotate site is built by Thr-121 and Arg-149.

It belongs to the purine/pyrimidine phosphoribosyltransferase family. PyrE subfamily. Homodimer. Mg(2+) serves as cofactor.

The enzyme catalyses orotidine 5'-phosphate + diphosphate = orotate + 5-phospho-alpha-D-ribose 1-diphosphate. It functions in the pathway pyrimidine metabolism; UMP biosynthesis via de novo pathway; UMP from orotate: step 1/2. Catalyzes the transfer of a ribosyl phosphate group from 5-phosphoribose 1-diphosphate to orotate, leading to the formation of orotidine monophosphate (OMP). The polypeptide is Orotate phosphoribosyltransferase (Erythrobacter litoralis (strain HTCC2594)).